Reading from the N-terminus, the 259-residue chain is uncharacterized protein (259 aa).

The protein belongs to the BtpA family.

This is an uncharacterized protein from Pyrococcus horikoshii (strain ATCC 700860 / DSM 12428 / JCM 9974 / NBRC 100139 / OT-3).